The sequence spans 217 residues: Uridylate kinase (217 aa).

6–10 (KISGR) serves as a coordination point for ATP. Gly-38 provides a ligand contact to UMP. Residues Gly-39 and Arg-43 each contribute to the ATP site. Residues Asp-60 and 107–113 (FQPGQST) each bind UMP. Positions 134, 139, and 142 each coordinate ATP.

This sequence belongs to the UMP kinase family. In terms of assembly, homohexamer.

It is found in the cytoplasm. It carries out the reaction UMP + ATP = UDP + ADP. Its pathway is pyrimidine metabolism; CTP biosynthesis via de novo pathway; UDP from UMP (UMPK route): step 1/1. Its activity is regulated as follows. Inhibited by UTP. Catalyzes the reversible phosphorylation of UMP to UDP. In Pyrobaculum arsenaticum (strain DSM 13514 / JCM 11321 / PZ6), this protein is Uridylate kinase.